Here is a 142-residue protein sequence, read N- to C-terminus: MAKKIDAYIKLQVKSGSANPSPPVGPALGQKGVNIMEFCKAFNARTEKMEKGMPIPVVITVYSDRSFTFETKTPPASFLLKTAAGLKSGSPRPNTQKVGTIARAKIQEIAETKAADMTGADIEAMTRSIEGTARSMGLVVED.

The protein belongs to the universal ribosomal protein uL11 family. Part of the ribosomal stalk of the 50S ribosomal subunit. Interacts with L10 and the large rRNA to form the base of the stalk. L10 forms an elongated spine to which L12 dimers bind in a sequential fashion forming a multimeric L10(L12)X complex. One or more lysine residues are methylated.

Forms part of the ribosomal stalk which helps the ribosome interact with GTP-bound translation factors. This Shewanella sp. (strain W3-18-1) protein is Large ribosomal subunit protein uL11.